A 96-amino-acid chain; its full sequence is Co-chaperonin GroES (96 aa).

The protein belongs to the GroES chaperonin family. Heptamer of 7 subunits arranged in a ring. Interacts with the chaperonin GroEL.

It is found in the cytoplasm. In terms of biological role, together with the chaperonin GroEL, plays an essential role in assisting protein folding. The GroEL-GroES system forms a nano-cage that allows encapsulation of the non-native substrate proteins and provides a physical environment optimized to promote and accelerate protein folding. GroES binds to the apical surface of the GroEL ring, thereby capping the opening of the GroEL channel. This is Co-chaperonin GroES from Haemophilus influenzae (strain ATCC 51907 / DSM 11121 / KW20 / Rd).